The following is a 429-amino-acid chain: Aspartate--tRNA(Asp/Asn) ligase (429 aa).

Glu-167 is a binding site for L-aspartate. The interval Gln-189–Lys-192 is aspartate. Residue Arg-210 coordinates L-aspartate. ATP-binding positions include Arg-210 to Glu-212 and Glu-352. Residues Glu-352 and Ser-355 each contribute to the Mg(2+) site. Residues Ser-355 and Arg-359 each contribute to the L-aspartate site. ATP is bound at residue Gly-400–Arg-403.

The protein belongs to the class-II aminoacyl-tRNA synthetase family. Type 2 subfamily. In terms of assembly, homodimer. The cofactor is Mg(2+).

It is found in the cytoplasm. The enzyme catalyses tRNA(Asx) + L-aspartate + ATP = L-aspartyl-tRNA(Asx) + AMP + diphosphate. Aspartyl-tRNA synthetase with relaxed tRNA specificity since it is able to aspartylate not only its cognate tRNA(Asp) but also tRNA(Asn). Reaction proceeds in two steps: L-aspartate is first activated by ATP to form Asp-AMP and then transferred to the acceptor end of tRNA(Asp/Asn). The protein is Aspartate--tRNA(Asp/Asn) ligase of Sulfurisphaera tokodaii (strain DSM 16993 / JCM 10545 / NBRC 100140 / 7) (Sulfolobus tokodaii).